Consider the following 857-residue polypeptide: DNA mismatch repair protein MutS (857 aa).

608–615 (GPNMSGKS) lines the ATP pocket.

This sequence belongs to the DNA mismatch repair MutS family.

In terms of biological role, this protein is involved in the repair of mismatches in DNA. It is possible that it carries out the mismatch recognition step. This protein has a weak ATPase activity. The sequence is that of DNA mismatch repair protein MutS from Lacticaseibacillus paracasei (strain ATCC 334 / BCRC 17002 / CCUG 31169 / CIP 107868 / KCTC 3260 / NRRL B-441) (Lactobacillus paracasei).